A 226-amino-acid polypeptide reads, in one-letter code: Ribose-5-phosphate isomerase A (226 aa).

Residues 33–36 (TGST), 86–89 (DGAD), and 99–102 (KGGG) contribute to the substrate site. Glutamate 108 (proton acceptor) is an active-site residue. Lysine 126 contributes to the substrate binding site.

The protein belongs to the ribose 5-phosphate isomerase family. Homodimer.

It catalyses the reaction aldehydo-D-ribose 5-phosphate = D-ribulose 5-phosphate. Its pathway is carbohydrate degradation; pentose phosphate pathway; D-ribose 5-phosphate from D-ribulose 5-phosphate (non-oxidative stage): step 1/1. Catalyzes the reversible conversion of ribose-5-phosphate to ribulose 5-phosphate. The protein is Ribose-5-phosphate isomerase A of Bordetella bronchiseptica (strain ATCC BAA-588 / NCTC 13252 / RB50) (Alcaligenes bronchisepticus).